A 334-amino-acid polypeptide reads, in one-letter code: NmrA-like family domain-containing oxidoreductase lnaB (334 aa).

NADP(+) contacts are provided by residues 12-17 (GGTGKQ), 38-42 (RNAQS), 59-60 (DG), 80-82 (INS), Lys-138, and 162-165 (FLEN).

The protein belongs to the NmrA-type oxidoreductase family.

It functions in the pathway secondary metabolite biosynthesis. NmrA-like family domain-containing oxidoreductase; part of the lna gene cluster that mediates the biosynthesis of diastereomeric piperazines. Lna and lnb clusters encode sets of enzymes that produce overlapping sets of previously undescribed metabolites such as piperazinomycin-like metabolites or morpholine. The lna and lnb biosynthetic pathways appear to be part of a signaling network that controls the formation of sclerotia, a resilient overwintering structure. One primary function of the non-canonical nonribosomal peptide synthetases lnaA and lnbA consists in the reduction of L-tyrosine. The presence in the clusters of tailoring enzymes such as the oxidoreductases lnaB, lnbB, lnaE or lnbE, as well as of the cytochrome P450 monooxygenases lnaC, lnaD, or lnbC, might explain formation of various diastereomeric piperazines. This is NmrA-like family domain-containing oxidoreductase lnaB from Aspergillus flavus (strain ATCC 200026 / FGSC A1120 / IAM 13836 / NRRL 3357 / JCM 12722 / SRRC 167).